A 245-amino-acid chain; its full sequence is MNVTLLIPARYGSSRFPGKPLAPINGKPMIQHVYERASLAKGLTNIYVATDDDRIKAAVEGFGGKVVMTSPDAASGTDRINDAINQLGLKDDDLVINLQGDQPLIDPTSIEQVISLFERHPGEFEMATLGFEIVNKAELDDPMHVKMVFDNNNYALYFSRSRIPFGRDTQDYPVYKHLGVYAYTRKFVQAFAALPLGRLEDLEKLEQLRALEYGHKIKIAISAFDSIEVDTPEDIRKCEQRLAVD.

Belongs to the KdsB family.

It localises to the cytoplasm. It carries out the reaction 8-amino-3,8-dideoxy-alpha-D-manno-octulosonate + CTP = CMP-8-amino-3,8-dideoxy-alpha-D-manno-oct-2-ulosonate + diphosphate. It participates in bacterial outer membrane biogenesis; lipopolysaccharide biosynthesis. Its function is as follows. Activates KDO8N (a required 8-carbon sugar) for incorporation into bacterial lipopolysaccharide in the Shewanella genus. The polypeptide is 8-amino-3,8-dideoxy-manno-octulosonate cytidylyltransferase (Shewanella baltica (strain OS195)).